Reading from the N-terminus, the 719-residue chain is Protein Hook homolog 2 (719 aa).

The segment at 1-161 (MSVDKAELCG…ELMTKDTPDS (161 aa)) is required for localization to the centrosome and induction of aggresome formation. The interval 1–548 (MSVDKAELCG…LKRKLEEHLQ (548 aa)) is sufficient for interaction with microtubules. Residues 6–122 (AELCGSLLTW…KLLQLVLGCA (117 aa)) enclose the Calponin-homology (CH) domain. Ser163 carries the phosphoserine modification. 2 coiled-coil regions span residues 180–427 (LSEE…AQLQ) and 455–607 (AELR…VDKA). Thr230 bears the Phosphothreonine mark. The required for localization to the centrosome and induction of aggresome formation stretch occupies residues 533–719 (DAISILLKRK…SLNLRPTDKH (187 aa)). Residues 584–719 (HNLQKKDADL…SLNLRPTDKH (136 aa)) are sufficient for interaction with CNTRL. Residues 696–719 (LATNSRRGPLGRLASLNLRPTDKH) are disordered. Residue Ser710 is modified to Phosphoserine.

Belongs to the hook family. In terms of assembly, self-associates. Component of the FTS/Hook/FHIP complex (FHF complex), composed of AKTIP/FTS, FHIP1B, and one or more members of the Hook family of proteins HOOK1, HOOK2, and HOOK3. May interact directly with AKTIP/FTS, HOOK1 and HOOK3. Associates with several subunits of the homotypic vesicular sorting complex (the HOPS complex) including VPS16 and VPS41; these interactions may be indirect. Interacts with CNTRL. Interacts with microtubules. Interacts with ZC3H14. Interacts with LRGUK (via guanylate kinase-like domain). Interacts with CCDC181. Interacts with AP4M1; the interaction is direct, mediates the interaction between FTS-Hook-FHIP (FHF) complex and AP-4 and the perinuclear distribution of AP-4.

Its subcellular location is the cytoplasm. It localises to the cytoskeleton. It is found in the microtubule organizing center. The protein resides in the centrosome. The protein localises to the golgi apparatus. Its subcellular location is the trans-Golgi network. Its function is as follows. Component of the FTS/Hook/FHIP complex (FHF complex). The FHF complex may function to promote vesicle trafficking and/or fusion via the homotypic vesicular protein sorting complex (the HOPS complex). Contributes to the establishment and maintenance of centrosome function. May function in the positioning or formation of aggresomes, which are pericentriolar accumulations of misfolded proteins, proteasomes and chaperones. FHF complex promotes the distribution of AP-4 complex to the perinuclear area of the cell. The sequence is that of Protein Hook homolog 2 (HOOK2) from Homo sapiens (Human).